Here is a 1111-residue protein sequence, read N- to C-terminus: NBPF family member NBPF9 (1111 aa).

Residues 70 to 130 (MLRNERQFKE…RSLNEHLQAL (61 aa)) adopt a coiled-coil conformation. A disordered region spans residues 161–198 (KLSPENDEDEDEDVQVEEDEKVLESSAPREVQKAEESK). The segment covering 165–181 (ENDEDEDEDVQVEEDEK) has biased composition (acidic residues). The 95-residue stretch at 165–259 (ENDEDEDEDV…ECQDALNILP (95 aa)) folds into the Olduvai 1 domain. Residues 341-401 (MLRNERQFKE…RSLNEHLQAL (61 aa)) adopt a coiled-coil conformation. Olduvai domains lie at 436–528 (ENDN…HIIP), 529–600 (ENES…VDIG), 601–692 (RHRW…PSCP), 695–750 (SREL…LDLD), 751–843 (RIKK…RSKK), 844–919 (KRRR…LDVD), 920–1012 (RIKK…RSKK), and 1013–1111 (ERRR…IFPQ). 2 disordered regions span residues 451 to 474 (EKVQKSSAPREMQKAEEKEVPEDS) and 510 to 569 (TLIG…STPS). 2 stretches are compositionally biased toward acidic residues: residues 530-539 (NESDDEEEEE) and 550-562 (ESEEEEVPQESWD). 2 disordered regions span residues 829 to 871 (KKGK…LDEK) and 999 to 1033 (KGKGKKRRGRRSKKERRRGRKEGEEDQNPPCPRLN). Basic residues-rich tracts occupy residues 831-849 (GKGKKRRGRRSKKKRRRGR) and 1000-1018 (GKGKKRRGRRSKKERRRGR).

It belongs to the NBPF family. Expressed in a neuroblastoma cell line.

It localises to the cytoplasm. This chain is NBPF family member NBPF9, found in Homo sapiens (Human).